Here is a 131-residue protein sequence, read N- to C-terminus: GATA zinc finger domain-containing protein 2 (131 aa).

The span at 21–55 (STATDATSADGAASETDAASATDTTSATDPTSATD) shows a compositional bias: low complexity. The segment at 21-85 (STATDATSAD…RGRPYISTPP (65 aa)) is disordered. The segment covering 57 to 74 (IATTNTTGITSSGPTTNG) has biased composition (polar residues). The segment at 88 to 115 (CYDCGRTRSPYWRKGTYNGQVVHLCNAC) adopts a GATA-type zinc-finger fold.

The protein is GATA zinc finger domain-containing protein 2 (comH) of Dictyostelium discoideum (Social amoeba).